The chain runs to 299 residues: Homoserine O-acetyltransferase (299 aa).

The active-site Acyl-thioester intermediate is the Cys-142. Residues Lys-163 and Ser-192 each contribute to the substrate site. The Proton acceptor role is filled by His-235. Residue Glu-237 is part of the active site. Substrate is bound at residue Arg-249.

Belongs to the MetA family.

The protein resides in the cytoplasm. The enzyme catalyses L-homoserine + acetyl-CoA = O-acetyl-L-homoserine + CoA. Its pathway is amino-acid biosynthesis; L-methionine biosynthesis via de novo pathway; O-acetyl-L-homoserine from L-homoserine: step 1/1. In terms of biological role, transfers an acetyl group from acetyl-CoA to L-homoserine, forming acetyl-L-homoserine. The sequence is that of Homoserine O-acetyltransferase from Synechococcus sp. (strain ATCC 27144 / PCC 6301 / SAUG 1402/1) (Anacystis nidulans).